The sequence spans 872 residues: Cilia- and flagella-associated protein 58 (872 aa).

Coiled-coil stretches lie at residues 106-595 (VDSA…ADGE) and 642-839 (ESQY…QKNK).

This sequence belongs to the CFAP58 family. Interacts with ODFP2.

The protein resides in the cell projection. It localises to the cilium. It is found in the flagellum. Its subcellular location is the cytoplasm. The protein localises to the cytoskeleton. The protein resides in the microtubule organizing center. It localises to the centrosome. Has an essential role in the assembly and organization of the sperm flagellar axoneme. Required for the elongation of the primary cilium and sperm flagellar midpiece via modulation of the Notch signaling pathway. The sequence is that of Cilia- and flagella-associated protein 58 from Homo sapiens (Human).